A 626-amino-acid polypeptide reads, in one-letter code: Lysine--tRNA ligase, cytoplasmic (626 aa).

An N-acetylmethionine modification is found at M1. 2 stretches are compositionally biased toward polar residues: residues 1–11 (MEGAADQTTKA) and 18–27 (DSSTTLNAAE). Residues 1–84 (MEGAADQTTK…QKAVAADDEE (84 aa)) are disordered. Residues 37 to 69 (RSKNALKKEQKMKQKEEEKRRKDEEKAEKAKQA) adopt a coiled-coil conformation. A compositionally biased stretch (basic and acidic residues) spans 42–67 (LKKEQKMKQKEEEKRRKDEEKAEKAK). A compositionally biased stretch (low complexity) spans 69–78 (APKASSQKAV). The OB DNA-binding region spans 141 to 217 (SLAGRIMSKR…RGELSIFPRS (77 aa)). G313 and E337 together coordinate substrate. ATP is bound by residues 359–361 (RNE) and 367–368 (HN). Substrate contacts are provided by E375 and Y377. 2 residues coordinate Ca(2+): E521 and E528. 528–529 (EL) is an ATP binding site. Substrate contacts are provided by N531 and E535. 584 to 587 (GIDR) is an ATP binding site.

It belongs to the class-II aminoacyl-tRNA synthetase family. Requires Ca(2+) as cofactor.

The protein resides in the cytoplasm. Its subcellular location is the cytosol. The catalysed reaction is tRNA(Lys) + L-lysine + ATP = L-lysyl-tRNA(Lys) + AMP + diphosphate. Its function is as follows. Catalyzes the specific attachment of an amino acid to its cognate tRNA in a 2 step reaction: the amino acid (AA) is first activated by ATP to form AA-AMP and then transferred to the acceptor end of the tRNA. Promotes aminoacylation of non-cognate tRNAs and translational recoding of lysine at nonsense codons. The sequence is that of Lysine--tRNA ligase, cytoplasmic from Arabidopsis thaliana (Mouse-ear cress).